Reading from the N-terminus, the 768-residue chain is Pentatricopeptide repeat-containing protein At4g01030, mitochondrial (768 aa).

The N-terminal 25 residues, 1–25 (MYRFLGLTIHGGLIKRGLDNSDTRV), are a transit peptide targeting the mitochondrion. PPR repeat units follow at residues 22–52 (DTRVVSASMGFYGRCVSLGFANKLFDEMPKR), 53–87 (DDLAWNEIVMVNLRSGNWEKAVELFREMQFSGAKA), 88–122 (YDSTMVKLLQVCSNKEGFAEGRQIHGYVLRLGLES), 123–153 (NVSMCNSLIVMYSRNGKLELSRKVFNSMKDR), 154–188 (NLSSWNSILSSYTKLGYVDDAIGLLDEMEICGLKP), 189–223 (DIVTWNSLLSGYASKGLSKDAIAVLKRMQIAGLKP), 224–254 (STSSISSLLQAVAEPGHLKLGKAIHGYILRN), 259–289 (DVYVETTLIDMYIKTGYLPYARMVFDMMDAK), 290–324 (NIVAWNSLVSGLSYACLLKDAEALMIRMEKEGIKP), 325–359 (DAITWNSLASGYATLGKPEKALDVIGKMKEKGVAP), 360–394 (NVVSWTAIFSGCSKNGNFRNALKVFIKMQEEGVGP), 395–429 (NAATMSTLLKILGCLSLLHSGKEVHGFCLRKNLIC), 430–460 (DAYVATALVDMYGKSGDLQSAIEIFWGIKNK), 461–495 (SLASWNCMLMGYAMFGRGEEGIAAFSVMLEAGMEP), 496–526 (DAITFTSVLSVCKNSGLVQEGWKYFDLMRSR), and 532–562 (TIEHCSCMVDLLGRSGYLDEAWDFIQTMSLK). Residues 567–642 (IWGAFLSSCK…QDLWSWIQID (76 aa)) form a type E motif region. The tract at residues 643–673 (QTVHIFYAEGKTHPDEGDIYFELYKLVSEMK) is type E(+) motif. The type DYW motif stretch occupies residues 674–768 (KSGYVPDTSC…DGKCSCNDSW (95 aa)).

The protein belongs to the PPR family. PCMP-H subfamily.

It localises to the mitochondrion. The protein is Pentatricopeptide repeat-containing protein At4g01030, mitochondrial (PCMP-H65) of Arabidopsis thaliana (Mouse-ear cress).